The following is an 82-amino-acid chain: Sec-independent protein translocase protein TatA (82 aa).

A helical membrane pass occupies residues 1–21; sequence MGSLSIWHWLIVGAVVLLVFG. Positions 43–82 are disordered; that stretch reads GLSEDEEKAEAKPVGEPSLRSLDHQGAGDPLKTPDARKIG.

Belongs to the TatA/E family. As to quaternary structure, the Tat system comprises two distinct complexes: a TatABC complex, containing multiple copies of TatA, TatB and TatC subunits, and a separate TatA complex, containing only TatA subunits. Substrates initially bind to the TatABC complex, which probably triggers association of the separate TatA complex to form the active translocon.

The protein resides in the cell inner membrane. Functionally, part of the twin-arginine translocation (Tat) system that transports large folded proteins containing a characteristic twin-arginine motif in their signal peptide across membranes. TatA could form the protein-conducting channel of the Tat system. The chain is Sec-independent protein translocase protein TatA from Methylocella silvestris (strain DSM 15510 / CIP 108128 / LMG 27833 / NCIMB 13906 / BL2).